The chain runs to 382 residues: Anhydro-N-acetylmuramic acid kinase (382 aa).

15-22 contacts ATP; sequence GTSLDGVD.

It belongs to the anhydro-N-acetylmuramic acid kinase family.

It catalyses the reaction 1,6-anhydro-N-acetyl-beta-muramate + ATP + H2O = N-acetyl-D-muramate 6-phosphate + ADP + H(+). Its pathway is amino-sugar metabolism; 1,6-anhydro-N-acetylmuramate degradation. The protein operates within cell wall biogenesis; peptidoglycan recycling. Its function is as follows. Catalyzes the specific phosphorylation of 1,6-anhydro-N-acetylmuramic acid (anhMurNAc) with the simultaneous cleavage of the 1,6-anhydro ring, generating MurNAc-6-P. Is required for the utilization of anhMurNAc either imported from the medium or derived from its own cell wall murein, and thus plays a role in cell wall recycling. The protein is Anhydro-N-acetylmuramic acid kinase of Haemophilus influenzae (strain ATCC 51907 / DSM 11121 / KW20 / Rd).